Consider the following 73-residue polypeptide: Homeodomain-only protein (73 aa).

A DNA-binding region (homeobox; degenerate) is located at residues 3 to 62 (AQTASGPTEDQVEILEYNFNKVNKHPDPTTLCLIAAEAGLTEEQTQKWFKQRLAEWRRSE).

Interacts with serum response factor (SRF). Component of a large complex containing histone deacetylases such as HDAC2. Interacts with the acetylated forms of HSPA1A and HSPA1B. Interacts with HSPA8. Expressed in the embryonic and adult heart and in the adult brain, liver, lung, skeletal muscle, intestine and spleen. Throughout embryonic and postnatal development, it is expressed in the myocardium.

It localises to the nucleus. Its subcellular location is the cytoplasm. In terms of biological role, atypical homeodomain protein which does not bind DNA and is required to modulate cardiac growth and development. Acts via its interaction with SRF, thereby modulating the expression of SRF-dependent cardiac-specific genes and cardiac development. Prevents SRF-dependent transcription either by inhibiting SRF binding to DNA or by recruiting histone deacetylase (HDAC) proteins that prevent transcription by SRF. Overexpression causes cardiac hypertrophy. Acts as a co-chaperone for HSPA1A and HSPA1B chaperone proteins and assists in chaperone-mediated protein refolding. The polypeptide is Homeodomain-only protein (Hopx) (Mus musculus (Mouse)).